The primary structure comprises 146 residues: MQFRPSIALVLSIVGILSLEISWTDGCTCFMETRREKCQRSTFGFIGYPYFAGRTNIGGMEYNRFCFFIVRIHKGLSVVFGEPCVYSSVSSAACGTGFYSGSLSIVNGYIESGVKQVNLCGWNERWRSVPSFVKFMFLTQPNWCYA.

Residues 1 to 26 form the signal peptide; it reads MQFRPSIALVLSIVGILSLEISWTDG.

As to expression, prismatic layer of shell (at protein level). Expressed primarily in the mantle with highest level in the mantle edge and lower level in the mantle pallium.

It is found in the secreted. This is an uncharacterized protein from Margaritifera margaritifera (Freshwater pearl mussel).